We begin with the raw amino-acid sequence, 435 residues long: GTPase Der (435 aa).

EngA-type G domains lie at 3–167 (NIVA…KDEG) and 176–351 (PRIA…ENRG). GTP is bound by residues 9-16 (GRPNVGKS), 56-60 (DTGGY), 119-122 (NKSD), 182-189 (GRPNAGKS), 229-233 (DTAGI), and 294-297 (NKWD). Positions 352–435 (KRIPTSELND…VPISIVYRKK (84 aa)) constitute a KH-like domain.

This sequence belongs to the TRAFAC class TrmE-Era-EngA-EngB-Septin-like GTPase superfamily. EngA (Der) GTPase family. In terms of assembly, associates with the 50S ribosomal subunit.

In terms of biological role, GTPase that plays an essential role in the late steps of ribosome biogenesis. The protein is GTPase Der of Cytophaga hutchinsonii (strain ATCC 33406 / DSM 1761 / CIP 103989 / NBRC 15051 / NCIMB 9469 / D465).